The primary structure comprises 89 residues: Dynein light chain 2, cytoplasmic (89 aa).

Belongs to the dynein light chain family. As to quaternary structure, homodimer. The cytoplasmic dynein 1 complex consists of two catalytic heavy chains (HCs) and a number of non-catalytic subunits which present intermediate chains (ICs), light intermediate chains (LICs) and light chains (LCs); the composition seems to vary in respect to the IC, LIC and LC composition. The heavy chain homodimer serves as a scaffold for the probable homodimeric assembly of the respective non-catalytic subunits. Dynein ICs and LICs bind directly to the HC dimer and the LCs assemble on the IC dimer. Interacts with DYNC1I1. Interacts with BMF. Component of the myosin V motor complex. Interacts with BCAS1. Interacts with Basson/BSN. Interacts with AMBRA1 (via TQT motifs); tethering AMBRA1 to the cytoskeleton. Interacts with IQUB.

It is found in the cytoplasm. The protein resides in the cytoskeleton. Its function is as follows. Acts as one of several non-catalytic accessory components of the cytoplasmic dynein 1 complex that are thought to be involved in linking dynein to cargos and to adapter proteins that regulate dynein function. Cytoplasmic dynein 1 acts as a motor for the intracellular retrograde motility of vesicles and organelles along microtubules. May play a role in changing or maintaining the spatial distribution of cytoskeletal structures. This Homo sapiens (Human) protein is Dynein light chain 2, cytoplasmic (DYNLL2).